The following is a 123-amino-acid chain: Protein Wnt-3a (123 aa).

Ser1 is lipidated: O-palmitoleoyl serine. Cys89 and Cys104 form a disulfide bridge. The N-linked (GlcNAc...) asparagine glycan is linked to Asn90.

This sequence belongs to the Wnt family. Disulfide bonds have critical and distinct roles in secretion and activity. Loss of each conserved cysteine results in high molecular weight oxidized Wnt oligomers, which are formed through inter-Wnt disulfide bonding. In terms of processing, palmitoleoylation is required for efficient binding to frizzled receptors. Depalmitoleoylation leads to Wnt signaling pathway inhibition.

The protein resides in the secreted. Its subcellular location is the extracellular space. The protein localises to the extracellular matrix. In terms of biological role, ligand for members of the frizzled family of seven transmembrane receptors. Functions in the canonical Wnt signaling pathway that results in activation of transcription factors of the TCF/LEF family. Required for normal embryonic mesoderm development and formation of caudal somites. Required for normal morphogenesis of the developing neural tube. The chain is Protein Wnt-3a (WNT-3A) from Plethodon jordani (Red-cheeked salamander).